The sequence spans 371 residues: Protein NDRG2 (371 aa).

The disordered stretch occupies residues 1 to 21 (MAELQEVQITEEKPLLPGQTP). Alanine 2 is modified (N-acetylalanine). Threonine 20 bears the Phosphothreonine mark. Residues serine 326 and serine 328 each carry the phosphoserine modification. At threonine 330 the chain carries Phosphothreonine. At serine 332 the chain carries Phosphoserine. The residue at position 334 (threonine 334) is a Phosphothreonine. Residues 334–371 (TSAASVDGNRSRSRTLSQSSESGTLSSGPPGHTMEVSC) form a disordered region. Phosphoserine is present on residues serine 335, serine 338, and serine 344. Residues 347-361 (RTLSQSSESGTLSSG) show a composition bias toward low complexity. Threonine 348 carries the post-translational modification Phosphothreonine. Phosphoserine is present on residues serine 350, serine 352, serine 353, and serine 355. The residue at position 357 (threonine 357) is a Phosphothreonine. Serine 370 bears the Phosphoserine mark.

The protein belongs to the NDRG family. In terms of assembly, interacts with CTNNB1. Highly expressed in brain, heart, skeletal muscle and salivary gland, and moderately in kidney and liver. Expressed in dendritic cells, but not in other blood cells. Expression levels are low in pancreatic and liver cancer tissues; absent in meningioma. Expressed in low-grade gliomas but present at low levels in glioblastoma. Isoform 1 and isoform 2 are present in brain neurons and up-regulated in Alzheimer disease (at protein level).

It localises to the cytoplasm. It is found in the perinuclear region. The protein resides in the cell projection. Its subcellular location is the growth cone. In terms of biological role, contributes to the regulation of the Wnt signaling pathway. Down-regulates CTNNB1-mediated transcriptional activation of target genes, such as CCND1, and may thereby act as tumor suppressor. May be involved in dendritic cell and neuron differentiation. The chain is Protein NDRG2 (NDRG2) from Homo sapiens (Human).